The following is a 134-amino-acid chain: FK506-binding protein 2 (134 aa).

The signal sequence occupies residues 1–19 (MRILLLSALFLSLTTLVLS). The PPIase FKBP-type domain maps to 39–127 (GDTVHMHYRG…IFETELVQIE (89 aa)). A Prevents secretion from ER motif is present at residues 131–134 (NDEL).

The protein belongs to the FKBP-type PPIase family. FKBP2 subfamily.

The protein resides in the endoplasmic reticulum. It carries out the reaction [protein]-peptidylproline (omega=180) = [protein]-peptidylproline (omega=0). With respect to regulation, inhibited by both FK506 and rapamycin. Its function is as follows. PPIases accelerate the folding of proteins. It catalyzes the cis-trans isomerization of proline imidic peptide bonds in oligopeptides. The polypeptide is FK506-binding protein 2 (fpr2) (Aspergillus fumigatus (strain ATCC MYA-4609 / CBS 101355 / FGSC A1100 / Af293) (Neosartorya fumigata)).